A 1217-amino-acid chain; its full sequence is Nuclear matrix constituent protein 1 (1217 aa).

The span at 1-14 shows a compositional bias: polar residues; sequence MLTPQRSAWSLKSK. The disordered stretch occupies residues 1–45; it reads MLTPQRSAWSLKSKVSSEKPRSKGKGITKNLDSAATPFPPLGLLN. A coiled-coil region spans residues 159–746; the sequence is VTDLEKALRE…KNQRAEFIKE (588 aa). Over residues 892–904 the composition is skewed to low complexity; that stretch reads SEDAAANDNNPAA. Disordered regions lie at residues 892–969, 981–1057, 1087–1117, and 1152–1217; these read SEDA…VVDD, EEAK…VQAP, VQTK…HKVT, and ISEM…FFTT. Positions 947–960 are enriched in basic residues; sequence STRRGRGGKTVRRT. Composition is skewed to polar residues over residues 986-1007 and 1087-1103; these read SSQQ…TSNT and VQTK…NQIS. Positions 1173–1186 are enriched in low complexity; that stretch reads EEPATPSSGSSTSG. The span at 1189-1200 shows a compositional bias: acidic residues; the sequence is GNDDDMDDDDEE.

This sequence belongs to the CRWN family.

The protein localises to the nucleus matrix. It localises to the nucleus lamina. Functionally, architectural component of nuclear structure that plays different roles in controlling nuclear size and morphology. Involved in the organization of multimeric complexes in the peripheral nucleoskeleton. This chain is Nuclear matrix constituent protein 1, found in Allium cepa (Onion).